The following is a 362-amino-acid chain: Heat-inducible transcription repressor HrcA (362 aa).

Belongs to the HrcA family.

Functionally, negative regulator of class I heat shock genes (grpE-dnaK-dnaJ and groELS operons). Prevents heat-shock induction of these operons. In Rhizobium rhizogenes (strain K84 / ATCC BAA-868) (Agrobacterium radiobacter), this protein is Heat-inducible transcription repressor HrcA.